A 453-amino-acid chain; its full sequence is Na(+)/H(+) antiporter NhaA 2 (453 aa).

12 helical membrane-spanning segments follow: residues 23-43 (FLHI…AALI), 74-94 (LHFW…GMEI), 111-131 (LPMA…LSFG), 139-159 (GWAV…ALLG), 168-188 (VFLL…IAFF), 191-211 (GGLD…VIGL), 214-234 (IGVG…LGIL), 235-255 (LTGA…PVTA), 316-336 (VAFG…LSGV), 345-365 (WVMI…IVSV), 386-406 (IVLV…IANL), and 419-439 (LGVL…GVWS).

The protein belongs to the NhaA Na(+)/H(+) (TC 2.A.33) antiporter family.

The protein localises to the cell inner membrane. The catalysed reaction is Na(+)(in) + 2 H(+)(out) = Na(+)(out) + 2 H(+)(in). Functionally, na(+)/H(+) antiporter that extrudes sodium in exchange for external protons. The sequence is that of Na(+)/H(+) antiporter NhaA 2 from Pseudomonas putida (strain ATCC 700007 / DSM 6899 / JCM 31910 / BCRC 17059 / LMG 24140 / F1).